Consider the following 193-residue polypeptide: Holliday junction branch migration complex subunit RuvA (193 aa).

The segment at 1-64 (MIGRIAGTLL…EDAHLLYGFL (64 aa)) is domain I. Positions 65–139 (TPQERSTFRE…GKLGADLGPL (75 aa)) are domain II. A flexible linker region spans residues 139–143 (LAGAA). The tract at residues 144-193 (SPSDHAADILNALLALGYSEKEALAAIKNVPAGTGVSEGIKLSLKALSKA) is domain III.

Belongs to the RuvA family. In terms of assembly, homotetramer. Forms an RuvA(8)-RuvB(12)-Holliday junction (HJ) complex. HJ DNA is sandwiched between 2 RuvA tetramers; dsDNA enters through RuvA and exits via RuvB. An RuvB hexamer assembles on each DNA strand where it exits the tetramer. Each RuvB hexamer is contacted by two RuvA subunits (via domain III) on 2 adjacent RuvB subunits; this complex drives branch migration. In the full resolvosome a probable DNA-RuvA(4)-RuvB(12)-RuvC(2) complex forms which resolves the HJ.

The protein resides in the cytoplasm. Its function is as follows. The RuvA-RuvB-RuvC complex processes Holliday junction (HJ) DNA during genetic recombination and DNA repair, while the RuvA-RuvB complex plays an important role in the rescue of blocked DNA replication forks via replication fork reversal (RFR). RuvA specifically binds to HJ cruciform DNA, conferring on it an open structure. The RuvB hexamer acts as an ATP-dependent pump, pulling dsDNA into and through the RuvAB complex. HJ branch migration allows RuvC to scan DNA until it finds its consensus sequence, where it cleaves and resolves the cruciform DNA. The polypeptide is Holliday junction branch migration complex subunit RuvA (Burkholderia thailandensis (strain ATCC 700388 / DSM 13276 / CCUG 48851 / CIP 106301 / E264)).